We begin with the raw amino-acid sequence, 395 residues long: S-adenosylmethionine synthase (395 aa).

An ATP-binding site is contributed by His18. Position 20 (Asp20) interacts with Mg(2+). Position 46 (Glu46) interacts with K(+). L-methionine-binding residues include Glu59 and Gln103. Positions 103 to 113 (QSVDIAVGVDA) are flexible loop. ATP-binding positions include 170–172 (DAK), 235–236 (KF), Asp244, 250–251 (RK), Ala267, and Lys271. An L-methionine-binding site is contributed by Asp244. Residue Lys275 participates in L-methionine binding.

Belongs to the AdoMet synthase family. In terms of assembly, homotetramer; dimer of dimers. Mg(2+) is required as a cofactor. Requires K(+) as cofactor.

Its subcellular location is the cytoplasm. The catalysed reaction is L-methionine + ATP + H2O = S-adenosyl-L-methionine + phosphate + diphosphate. The protein operates within amino-acid biosynthesis; S-adenosyl-L-methionine biosynthesis; S-adenosyl-L-methionine from L-methionine: step 1/1. Its function is as follows. Catalyzes the formation of S-adenosylmethionine (AdoMet) from methionine and ATP. The overall synthetic reaction is composed of two sequential steps, AdoMet formation and the subsequent tripolyphosphate hydrolysis which occurs prior to release of AdoMet from the enzyme. The protein is S-adenosylmethionine synthase of Acidiphilium cryptum (strain JF-5).